The sequence spans 500 residues: NAD(P)H-quinone oxidoreductase chain 4, chloroplastic (500 aa).

Transmembrane regions (helical) follow at residues 4–24 (FPWLTAILLLPISAGSSILFI), 37–57 (ICICLLELLLMTYVFYYNFQL), 80–100 (LGIDGLSIGPILLTGFITTLA), 134–154 (LLLFFIMWELELIPVYLLLSM), 167–187 (FILYTAGGSIFLLIGVLGMGL), 208–228 (GLEILFYFGFLIAYAAKPPII), 242–262 (HYSTCMLLAGILLKMGAYGLV), 272–292 (AHSLFSPWLVIVGTLQIIYAA), 330–350 (GAILQIISHGFIGAALFFLAG), 386–406 (LASPGMSGFVAEFLVFLGIIT), 416–436 (ILITVVMAIGMILTPIYLLSM), and 462–482 (IFILISILLPVMGIGIYPDFV).

It belongs to the complex I subunit 4 family.

The protein resides in the plastid. Its subcellular location is the chloroplast thylakoid membrane. The enzyme catalyses a plastoquinone + NADH + (n+1) H(+)(in) = a plastoquinol + NAD(+) + n H(+)(out). It carries out the reaction a plastoquinone + NADPH + (n+1) H(+)(in) = a plastoquinol + NADP(+) + n H(+)(out). The polypeptide is NAD(P)H-quinone oxidoreductase chain 4, chloroplastic (Amborella trichopoda).